We begin with the raw amino-acid sequence, 412 residues long: Branched-chain alpha-ketoacid dehydrogenase kinase (412 aa).

The N-terminal 30 residues, 1–30 (MILASVLRSGPGGGLPLRPLLGPALALRAR), are a transit peptide targeting the mitochondrion. The residue at position 31 (serine 31) is a Phosphoserine. The residue at position 52 (serine 52) is a Phosphoserine; by autocatalysis. Positions 159-404 (LDDHKDVVTL…DVYLRLRHID (246 aa)) constitute a Histidine kinase domain. Residues lysine 192 and lysine 233 each carry the N6-acetyllysine modification. Asparagine 279 and aspartate 315 together coordinate ATP. Asparagine 279 contacts Mg(2+). K(+) is bound by residues valine 328, aspartate 330, and phenylalanine 333. ATP-binding residues include threonine 334 and threonine 335. Phosphoserine occurs at positions 356 and 360. Positions 364, 367, and 370 each coordinate ATP. Glycine 367 contacts K(+).

It belongs to the PDK/BCKDK protein kinase family. As to quaternary structure, homodimer. Homotetramer. Dimerizes through interaction of two opposing nucleotide-binding domains. Interacts with E2 component of the branched-chain alpha-ketoacid dehydrogenase (BCKDH) complex. Competes with BCKDK for binding to the E2 component; this interaction is modulated by branched-chain alpha-keto acids. At steady state, BCKDH holoenzyme contains BCKDK and BCKDHA is phosphorylated. In response to high levels of branched-chain alpha-keto acids, the inhibitory BCKDK is replaced by activating PPM1K leading to BCKDHA dephosphorylation and BCAA degradation. In terms of processing, autophosphorylated. Ubiquitous.

It localises to the mitochondrion matrix. It catalyses the reaction L-seryl-[3-methyl-2-oxobutanoate dehydrogenase] + ATP = O-phospho-L-seryl-[3-methyl-2-oxobutanoate dehydrogenase] + ADP + H(+). It carries out the reaction L-seryl-[protein] + ATP = O-phospho-L-seryl-[protein] + ADP + H(+). It functions in the pathway protein modification. With respect to regulation, allosterically inhibited by certain thiazoles and thiophenes: thiazoles increase interaction with DBT/BCKDH-E2, whereas thiophenes reduce this interaction. Inhibited by 3,6- dichlorobenzo[b]thiophene-2-carboxylic acid (BT2). The ATP binding is mediated by both potassium and magnesium ions. Its function is as follows. Serine/threonine-protein kinase component of macronutrients metabolism. Forms a functional kinase and phosphatase pair with PPM1K, serving as a metabolic regulatory node that coordinates branched-chain amino acids (BCAAs) with glucose and lipid metabolism via two distinct phosphoprotein targets: mitochondrial BCKDHA subunit of the branched-chain alpha-ketoacid dehydrogenase (BCKDH) complex and cytosolic ACLY, a lipogenic enzyme of Krebs cycle. Phosphorylates and inactivates mitochondrial BCKDH complex a multisubunit complex consisting of three multimeric components each involved in different steps of BCAA catabolism: E1 composed of BCKDHA and BCKDHB, E2 core composed of DBT monomers, and E3 composed of DLD monomers. Associates with the E2 component of BCKDH complex and phosphorylates BCKDHA on Ser-337, leading to conformational changes that interrupt substrate channeling between E1 and E2 and inactivates the BCKDH complex. Phosphorylates ACLY on Ser-455 in response to changes in cellular carbohydrate abundance such as occurs during fasting to feeding metabolic transition. Refeeding stimulates MLXIPL/ChREBP transcription factor, leading to increased BCKDK to PPM1K expression ratio, phosphorylation and activation of ACLY that ultimately results in the generation of malonyl-CoA and oxaloacetate immediate substrates of de novo lipogenesis and glucogenesis, respectively. Recognizes phosphosites having SxxE/D canonical motif. The sequence is that of Branched-chain alpha-ketoacid dehydrogenase kinase from Homo sapiens (Human).